The chain runs to 465 residues: Purple acid phosphatase 2 (465 aa).

The first 32 residues, 1–32 (MGASRTGCYLLAVVLAAVMNAAIAGITSSFIR), serve as a signal peptide directing secretion. N-linked (GlcNAc...) asparagine glycans are attached at residues Asn110 and Asn138. Position 164 (Asp164) interacts with Fe cation. Asn172 is a glycosylation site (N-linked (GlcNAc...) asparagine). Fe cation contacts are provided by Asp193 and Tyr196. A Mn(2+)-binding site is contributed by Asp193. Mn(2+) is bound at residue Asn230. Asn230 is a substrate binding site. The N-linked (GlcNAc...) asparagine glycan is linked to Asn303. A Mn(2+)-binding site is contributed by His315. Catalysis depends on His325, which acts as the Proton donor. Residue His352 coordinates Mn(2+). 352–354 (HVH) lines the substrate pocket. Residue His354 participates in Fe cation binding. N-linked (GlcNAc...) asparagine glycosylation is found at Asn400 and Asn425.

It belongs to the metallophosphoesterase superfamily. Purple acid phosphatase family. Homodimer; disulfide-linked. Fe cation is required as a cofactor. The cofactor is Mn(2+). It depends on Zn(2+) as a cofactor. Requires Cu(2+) as cofactor. Mg(2+) serves as cofactor.

It localises to the secreted. It carries out the reaction a phosphate monoester + H2O = an alcohol + phosphate. The chain is Purple acid phosphatase 2 (PAP2) from Ipomoea batatas (Sweet potato).